The sequence spans 631 residues: ATP-dependent RNA helicase mrh4, mitochondrial (631 aa).

The transit peptide at 1–45 (MNRLGRLPLPLPPSVCLFCRFRATASLPSSLQATRSMATARLRRR) directs the protein to the mitochondrion. Residues 68–112 (KERFGPFAGMNQTEARIRETPRARSRAAQKRSGEPEEDSQKESPL) form a disordered region. Residues 98-108 (RSGEPEEDSQK) are compositionally biased toward basic and acidic residues. The Q motif signature appears at 141 to 174 (TSFDQFQLLPVVRNSISSQALPGLVDVTPTPIQR). The segment covering 180–193 (LLEEPKTEKKPTKA) has biased composition (basic and acidic residues). The tract at residues 180–199 (LLEEPKTEKKPTKADDDEPR) is disordered. The Helicase ATP-binding domain occupies 194-406 (DDDEPRYDQY…RKRYPDIKRL (213 aa)). 207-214 (AETGSGKT) serves as a coordination point for ATP. The interval 229-249 (EARDKELEKKEQEEKAREREE) is disordered. Residues 353 to 356 (DEAD) carry the DEAD box motif. Residues 455 to 631 (GPYASYVAPK…EGMFRGQALI (177 aa)) form the Helicase C-terminal domain.

This sequence belongs to the DEAD box helicase family. MRH4 subfamily.

Its subcellular location is the mitochondrion. The catalysed reaction is ATP + H2O = ADP + phosphate + H(+). ATP-binding RNA helicase involved in mitochondrial RNA metabolism. Required for maintenance of mitochondrial DNA. The chain is ATP-dependent RNA helicase mrh4, mitochondrial (mrh4) from Aspergillus fumigatus (strain ATCC MYA-4609 / CBS 101355 / FGSC A1100 / Af293) (Neosartorya fumigata).